The primary structure comprises 147 residues: NAD(P)H-quinone oxidoreductase subunit N (147 aa).

Belongs to the complex I NdhN subunit family. As to quaternary structure, NDH-1 can be composed of about 15 different subunits; different subcomplexes with different compositions have been identified which probably have different functions.

The protein resides in the cellular thylakoid membrane. The catalysed reaction is a plastoquinone + NADH + (n+1) H(+)(in) = a plastoquinol + NAD(+) + n H(+)(out). It carries out the reaction a plastoquinone + NADPH + (n+1) H(+)(in) = a plastoquinol + NADP(+) + n H(+)(out). In terms of biological role, NDH-1 shuttles electrons from an unknown electron donor, via FMN and iron-sulfur (Fe-S) centers, to quinones in the respiratory and/or the photosynthetic chain. The immediate electron acceptor for the enzyme in this species is believed to be plastoquinone. Couples the redox reaction to proton translocation, and thus conserves the redox energy in a proton gradient. Cyanobacterial NDH-1 also plays a role in inorganic carbon-concentration. The polypeptide is NAD(P)H-quinone oxidoreductase subunit N (Synechococcus sp. (strain JA-2-3B'a(2-13)) (Cyanobacteria bacterium Yellowstone B-Prime)).